A 129-amino-acid polypeptide reads, in one-letter code: uncharacterized protein (129 aa).

This is an uncharacterized protein from Mycoplasma genitalium (strain ATCC 33530 / DSM 19775 / NCTC 10195 / G37) (Mycoplasmoides genitalium).